We begin with the raw amino-acid sequence, 103 residues long: UPF0102 protein aq_041 (103 aa).

The protein belongs to the UPF0102 family.

In Aquifex aeolicus (strain VF5), this protein is UPF0102 protein aq_041.